A 294-amino-acid chain; its full sequence is Beta-glucoside kinase (294 aa).

5 to 11 contributes to the ATP binding site; it reads AFDIGGT.

It belongs to the ROK (NagC/XylR) family.

The catalysed reaction is D-cellobiose + ATP = 6-phospho-beta-D-glucosyl-(1-&gt;4)-D-glucose + ADP + H(+). Catalyzes the ATP-dependent phosphorylation of cellobiose to produce cellobiose-6'-P. May have a dual role of kinase and transcriptional regulator of the cellobiose-PTS operon. This is Beta-glucoside kinase (bglK) from Listeria innocua serovar 6a (strain ATCC BAA-680 / CLIP 11262).